The following is a 678-amino-acid chain: MPRDKQKRGRRAEAKRKRDDVITDPTVLKRQKSSDVCNYPNPSYEQLEIRGDYIPLDEEPVDYTGTPFYGLLDIEEQEYFSHASGLLELNQFETEEEKSIFIERVYEEANGKELKIACSQSCSRLMEKLISASTVSQIKRLFSKFIGHFLNLVQHRFASHCCECLFIHAAQHVTSEMKKKSSKEKENLEEDSTSELQLEDLFLKAISELEGNWGYLLTERFASHTIRLLLLVLAGKPLRNSSTTTVIASRKKEYLASKVGTQLDPSISEKRAVPTSFNKALEKMMKDLVAGLDNTYLRALATHPVGNPVLQLLLSVELSHMGKSKAKDPDSLLRRLVPDENLQGDGESANFLKGLFYDPVGSRLLETIVQDAPGKFFRLFYKILVRERIGSFSRNEIAGHVVVRILERLSKDDLKSAMDMILPEVAPLVERSRLTVIKALIERGIVRGVDLGPLAAALLSAYGDDAVSRINNMLKLQRSNQESDGTTSSSNTSSPEQLHGSLLAQAMLKSTGPLSELVQSSLLAVTTETLISIAQDPVVSHVLQDALTLPTSTPQFRRQITSRFSGKIAELALHSSGSHVVDALWPATKDLLFVKQRFAEELVVHERALRDSFVGRAVWRNWSMDLYKRKRGSWIAIAKGLEDSTDINPNALTHKPKSNIDLARARFAAKANGSKAPS.

Positions 1–15 (MPRDKQKRGRRAEAK) are enriched in basic residues. Positions 1–24 (MPRDKQKRGRRAEAKRKRDDVITD) are disordered. Pumilio repeat units lie at residues 108 to 143 (EANG…RLFS), 291 to 334 (GLDN…SLLR), and 382 to 419 (KILV…SAMD). The disordered stretch occupies residues 477–496 (QRSNQESDGTTSSSNTSSPE). 2 Pumilio repeats span residues 524–562 (AVTT…QITS) and 563–600 (RFSG…RFAE).

It localises to the nucleus. The protein localises to the nucleolus. Functionally, RNA-binding nucleolar protein required for pre-rRNA processing. Involved in production of 18S rRNA and assembly of small ribosomal subunit. The sequence is that of Nucleolar protein 9 (NOP9) from Paracoccidioides brasiliensis (strain Pb18).